Consider the following 123-residue polypeptide: Small ribosomal subunit protein uS12 (123 aa).

3-methylthioaspartic acid is present on Asp-89.

Belongs to the universal ribosomal protein uS12 family. In terms of assembly, part of the 30S ribosomal subunit. Contacts proteins S8 and S17. May interact with IF1 in the 30S initiation complex.

Its function is as follows. With S4 and S5 plays an important role in translational accuracy. Interacts with and stabilizes bases of the 16S rRNA that are involved in tRNA selection in the A site and with the mRNA backbone. Located at the interface of the 30S and 50S subunits, it traverses the body of the 30S subunit contacting proteins on the other side and probably holding the rRNA structure together. The combined cluster of proteins S8, S12 and S17 appears to hold together the shoulder and platform of the 30S subunit. In Rhodopseudomonas palustris (strain BisA53), this protein is Small ribosomal subunit protein uS12.